An 839-amino-acid polypeptide reads, in one-letter code: Autophagy-related protein 9A (839 aa).

Positions 1 to 20 (MAQFDTEYQRLEASYSDSPP) are disordered. Position 2 is an N-acetylalanine (alanine 2). The Cytoplasmic portion of the chain corresponds to 2 to 61 (AQFDTEYQRLEASYSDSPPGEEDLLVHVAEGSKSPWHHIENLDLFFSRVYNLHQKNGFTC). The Tyrosine-based sorting signal motif lies at 8–11 (YQRL). Residues serine 14, serine 16, and serine 18 each carry the phosphoserine modification. Residues 62 to 84 (MLIGEIFELMQFLFVVAFTTFLV) traverse the membrane as a helical segment. At 85–128 (SCVDYDILFANKMVNHSLHPTEPVKVTLPDAFLPAQVCSARIQE) the chain is on the lumenal side. Residue asparagine 99 is glycosylated (N-linked (GlcNAc...) asparagine). The helical transmembrane segment at 129–154 (NGSLITILVIAGVFWIHRLIKFIYNI) threads the bilayer. The Cytoplasmic portion of the chain corresponds to 155-290 (CCYWEIHSFY…ELAQRLSNRI (136 aa)). An intramembrane segment occupies 291–301 (LWIGIANFLLC). Residues 302–319 (PLILIWQILYAFFSYAEV) lie on the Cytoplasmic side of the membrane. The stretch at 320–328 (LKREPGALG) is an intramembrane region. The Cytoplasmic segment spans residues 329–371 (ARCWSLYGRCYLRHFNELEHELQSRLNRGYKPASKYMNCFLSP). A helical membrane pass occupies residues 372-397 (LLTLLAKNGAFFAGSILAVLIALTIY). The Lumenal portion of the chain corresponds to 398–406 (DEDVLAVEH). Residues 407-424 (VLTTVTLLGVTVTVCRSF) form a helical membrane-spanning segment. Topologically, residues 425-470 (IPDQHMVFCPEQLLRVILAHIHYMPDHWQGNAHRSQTRDEFAQLFQ) are cytoplasmic. Residues 471 to 480 (YKAVFILEEL) lie within the membrane without spanning it. At 481–483 (LSP) the chain is on the cytoplasmic side. Residues 484-492 (IVTPLILIF) lie within the membrane without spanning it. Topologically, residues 493–839 (CLRPRALEII…DELPPQVHKV (347 aa)) are cytoplasmic. Phosphoserine is present on residues serine 656, serine 735, serine 738, serine 741, and serine 828. Disordered stretches follow at residues 656–686 (SPLQ…SSGS) and 719–839 (QQAQ…VHKV). A compositionally biased stretch (basic and acidic residues) spans 724-736 (EPERHLWHRRESD). 2 stretches are compositionally biased toward acidic residues: residues 737–747 (ESGESAPDEGG) and 823–832 (VPEEGSEDEL).

It belongs to the ATG9 family. Homotrimer; forms a homotrimer with a central pore that forms a path between the two membrane leaflets. Interacts (via cytoplasmic its C-terminus) with ATG2A. Interacts with SUPT20H. Interacts (via the tyrosine-based sorting signal motif) with AP4M1; promoting association with the AP-4 complex. Interacts with ARFIP1 and ARFIP2. Interacts with PI4K2A and PI4KB. Interacts with ATG4A; the interaction is direct and promotes ATG9A trafficking. Post-translationally, ufmylated in a DDRGK1 dependent manner.

It localises to the preautophagosomal structure membrane. It is found in the cytoplasmic vesicle. The protein resides in the autophagosome membrane. Its subcellular location is the golgi apparatus. The protein localises to the trans-Golgi network membrane. It localises to the late endosome membrane. It is found in the recycling endosome membrane. The protein resides in the endoplasmic reticulum membrane. Its subcellular location is the mitochondrion membrane. The enzyme catalyses a 1,2-diacyl-sn-glycero-3-phosphocholine(in) = a 1,2-diacyl-sn-glycero-3-phosphocholine(out). The catalysed reaction is a 1,2-diacyl-sn-glycero-3-phospho-L-serine(in) = a 1,2-diacyl-sn-glycero-3-phospho-L-serine(out). It catalyses the reaction a 1,2-diacyl-sn-glycero-3-phosphoethanolamine(in) = a 1,2-diacyl-sn-glycero-3-phosphoethanolamine(out). Phospholipid scramblase involved in autophagy by mediating autophagosomal membrane expansion. Cycles between the preautophagosomal structure/phagophore assembly site (PAS) and the cytoplasmic vesicle pool and supplies membrane for the growing autophagosome. Lipid scramblase activity plays a key role in preautophagosomal structure/phagophore assembly by distributing the phospholipids that arrive through ATG2 (ATG2A or ATG2B) from the cytoplasmic to the luminal leaflet of the bilayer, thereby driving autophagosomal membrane expansion. Also required to supply phosphatidylinositol 4-phosphate to the autophagosome initiation site by recruiting the phosphatidylinositol 4-kinase beta (PI4KB) in a process dependent on ARFIP2, but not ARFIP1. In addition to autophagy, also plays a role in necrotic cell death. This Pongo abelii (Sumatran orangutan) protein is Autophagy-related protein 9A.